Consider the following 642-residue polypeptide: Frizzled and smoothened-like protein B (642 aa).

An N-terminal signal peptide occupies residues 1 to 26 (MFNKNNNNNKIIIILKLFLIILIVNN). The Extracellular portion of the chain corresponds to 27–264 (NNNIKTFGLN…KWHQMYNMSK (238 aa)). Positions 47-197 (DPTATCSNYI…GFFPVPCSDP (151 aa)) constitute an FZ domain. 3 cysteine pairs are disulfide-bonded: Cys-52–Cys-123, Cys-65–Cys-116, and Cys-143–Cys-194. N-linked (GlcNAc...) asparagine glycosylation is found at Asn-80, Asn-153, Asn-162, Asn-177, Asn-203, Asn-222, and Asn-261. The chain crosses the membrane as a helical span at residues 265–285 (ILSTISFVCSIYNVLTFGILN). The Cytoplasmic portion of the chain corresponds to 286-294 (HRRSKYNYC). The helical transmembrane segment at 295–315 (ITFFSASVIIITMMDIVTYGI) threads the bilayer. Topologically, residues 316–344 (GYEKLLCPEPGRFAVQSDVSCGATGALFH) are extracellular. Residues 345–365 (IGITNGVFWWTTMSICLFAVV) traverse the membrane as a helical segment. At 366 to 375 (KRIKLFDFRY) the chain is on the cytoplasmic side. A helical membrane pass occupies residues 376-398 (FIIFNTTASLISVIIPLAGNAFM). The Extracellular segment spans residues 399–416 (AGTGSLACWIRKTWYVNS). A helical membrane pass occupies residues 417-437 (VFWIPCGIALTIGSVCIILVI). Residues 438–460 (YEIYKITKNVSTKDNRMILLQIK) lie on the Cytoplasmic side of the membrane. Residues 461 to 481 (PFLCVTLVGGSFYYLFIFNFD) traverse the membrane as a helical segment. An N-linked (GlcNAc...) asparagine glycan is attached at Asn-482. The Extracellular segment spans residues 482-514 (NESHSKEYKEKVVDYVMCLLSDTGKECLMAGPN). A helical membrane pass occupies residues 515–535 (YVAYFVFYFFIRLFGITFFCI). Topologically, residues 536 to 642 (YGTSQNARDI…INSASNTSSD (107 aa)) are cytoplasmic. The tract at residues 578–642 (GTNPTSNSKN…INSASNTSSD (65 aa)) is disordered. The span at 583 to 598 (SNSKNSKNNQNNQNNN) shows a compositional bias: low complexity. Positions 584-611 (NSKNSKNNQNNQNNNSRKEFESKNIELE) form a coiled coil. Residues 599 to 609 (SRKEFESKNIE) show a composition bias toward basic and acidic residues. 2 stretches are compositionally biased toward polar residues: residues 614–623 (ESISKGQTTR) and 632–642 (NINSASNTSSD).

The protein belongs to the G-protein coupled receptor Fz/Smo family.

It is found in the membrane. This Dictyostelium discoideum (Social amoeba) protein is Frizzled and smoothened-like protein B (fslB).